Consider the following 253-residue polypeptide: 5'/3'-nucleotidase SurE (253 aa).

Residues aspartate 8, aspartate 9, serine 39, and asparagine 92 each coordinate a divalent metal cation.

This sequence belongs to the SurE nucleotidase family. The cofactor is a divalent metal cation.

The protein resides in the cytoplasm. It carries out the reaction a ribonucleoside 5'-phosphate + H2O = a ribonucleoside + phosphate. It catalyses the reaction a ribonucleoside 3'-phosphate + H2O = a ribonucleoside + phosphate. The enzyme catalyses [phosphate](n) + H2O = [phosphate](n-1) + phosphate + H(+). Nucleotidase with a broad substrate specificity as it can dephosphorylate various ribo- and deoxyribonucleoside 5'-monophosphates and ribonucleoside 3'-monophosphates with highest affinity to 3'-AMP. Also hydrolyzes polyphosphate (exopolyphosphatase activity) with the preference for short-chain-length substrates (P20-25). Might be involved in the regulation of dNTP and NTP pools, and in the turnover of 3'-mononucleotides produced by numerous intracellular RNases (T1, T2, and F) during the degradation of various RNAs. In Citrobacter koseri (strain ATCC BAA-895 / CDC 4225-83 / SGSC4696), this protein is 5'/3'-nucleotidase SurE.